A 300-amino-acid chain; its full sequence is 3-dehydrocarnitine:acetyl-CoA trimethylamine transferase (300 aa).

Histidine 51, histidine 53, and glutamate 254 together coordinate Zn(2+).

This sequence belongs to the BKACE family. Homotetramer. The cofactor is Zn(2+).

The catalysed reaction is 3-dehydrocarnitine + acetyl-CoA = N,N,N-trimethylglycyl-CoA + acetoacetate. It functions in the pathway amine and polyamine metabolism; carnitine metabolism. In terms of biological role, catalyzes the condensation of dehydrocarnitine and acetyl-CoA, forming acetoacetate and betainyl-CoA (N,N,N-trimethylglycyl-CoA). Is involved in a L-carnitine degradation pathway that allows R.meliloti to grow on L-carnitine as the sole source of carbon and nitrogen. This is 3-dehydrocarnitine:acetyl-CoA trimethylamine transferase from Rhizobium meliloti (strain 1021) (Ensifer meliloti).